The sequence spans 491 residues: Fibrinogen beta chain (491 aa).

Residues 1-30 (MKRMVSWSFHKLKTMKHLLLLLLCVFLVKS) form the signal peptide. Gln-31 bears the Pyrrolidone carboxylic acid mark. A disordered region spans residues 44–75 (RGHRPLDKKREEAPSLRPAPPPISGGGYRARP). Residues 45 to 47 (GHR) are beta-chain polymerization, binding distal domain of another fibrin. The span at 47 to 57 (RPLDKKREEAP) shows a compositional bias: basic and acidic residues. The stretch at 157–222 (KRQKQVKDNE…ESDVSAQMEY (66 aa)) forms a coiled coil. Intrachain disulfides connect Cys-231–Cys-316 and Cys-241–Cys-270. Residues 232 to 488 (NIPVVSGKEC…KMSMKIRPFF (257 aa)) form the Fibrinogen C-terminal domain. N-linked (GlcNAc...) asparagine glycosylation is present at Asn-394. Residues Cys-424 and Cys-437 are joined by a disulfide bond.

As to quaternary structure, heterohexamer; disulfide linked. Contains 2 sets of 3 non-identical chains (alpha, beta and gamma). The 2 heterotrimers are in head to head conformation with the N-termini in a small central domain. Conversion of fibrinogen to fibrin is triggered by thrombin, which cleaves fibrinopeptides A and B from alpha and beta chains, and thus exposes the N-terminal polymerization sites responsible for the formation of the soft clot. The soft clot is converted into the hard clot by factor XIIIA which catalyzes the epsilon-(gamma-glutamyl)lysine cross-linking between gamma chains (stronger) and between alpha chains (weaker) of different monomers. Detected in blood plasma (at protein level).

Its subcellular location is the secreted. Its function is as follows. Cleaved by the protease thrombin to yield monomers which, together with fibrinogen alpha (FGA) and fibrinogen gamma (FGG), polymerize to form an insoluble fibrin matrix. Fibrin has a major function in hemostasis as one of the primary components of blood clots. In addition, functions during the early stages of wound repair to stabilize the lesion and guide cell migration during re-epithelialization. Was originally thought to be essential for platelet aggregation, based on in vitro studies using anticoagulated blood. However subsequent studies have shown that it is not absolutely required for thrombus formation in vivo. Enhances expression of SELP in activated platelets. Maternal fibrinogen is essential for successful pregnancy. Fibrin deposition is also associated with infection, where it protects against IFNG-mediated hemorrhage. May also facilitate the antibacterial immune response via both innate and T-cell mediated pathways. This Homo sapiens (Human) protein is Fibrinogen beta chain (FGB).